Here is a 256-residue protein sequence, read N- to C-terminus: Thiazole synthase (256 aa).

Catalysis depends on Lys-97, which acts as the Schiff-base intermediate with DXP. Residues Gly-158, 184–185 (AG), and 206–207 (NT) each bind 1-deoxy-D-xylulose 5-phosphate.

It belongs to the ThiG family. In terms of assembly, homotetramer. Forms heterodimers with either ThiH or ThiS.

The protein localises to the cytoplasm. It catalyses the reaction [ThiS sulfur-carrier protein]-C-terminal-Gly-aminoethanethioate + 2-iminoacetate + 1-deoxy-D-xylulose 5-phosphate = [ThiS sulfur-carrier protein]-C-terminal Gly-Gly + 2-[(2R,5Z)-2-carboxy-4-methylthiazol-5(2H)-ylidene]ethyl phosphate + 2 H2O + H(+). It functions in the pathway cofactor biosynthesis; thiamine diphosphate biosynthesis. In terms of biological role, catalyzes the rearrangement of 1-deoxy-D-xylulose 5-phosphate (DXP) to produce the thiazole phosphate moiety of thiamine. Sulfur is provided by the thiocarboxylate moiety of the carrier protein ThiS. In vitro, sulfur can be provided by H(2)S. This chain is Thiazole synthase, found in Flavobacterium psychrophilum (strain ATCC 49511 / DSM 21280 / CIP 103535 / JIP02/86).